The primary structure comprises 1358 residues: Probable serine/threonine-protein kinase ifkB (1358 aa).

Positions 1-582 (MIGKGGFGVV…TKQLLESGLL (582 aa)) constitute a Protein kinase domain. ATP-binding positions include 2 to 10 (IGKGGFGVV) and Lys25. Residues 125–359 (GANNTAGGGD…SSSRKKPPKE (235 aa)) form a disordered region. Over residues 136 to 148 (VSNANSNKSMIVG) the composition is skewed to polar residues. Residues 149–196 (NNNKKLTLSSSNTSSSSSLLSNNKSKILNTSKSTSTNTSTSTSTSNTN) are compositionally biased toward low complexity. Basic residues predominate over residues 197 to 208 (KNKKISKKKKSK). A compositionally biased stretch (low complexity) spans 258–285 (NNNNDSNNNYHSDNESDSFSGSISMSDG). The span at 306–333 (DDNENDDDDEEDDDDEYDEEDDDYETFD) shows a compositional bias: acidic residues. Residues 342–351 (SNNSKLSTSS) are compositionally biased toward low complexity. The Proton acceptor role is filled by Asp413. Disordered regions lie at residues 445–470 (DDLNSSTSNAANNINLSSSTNSTAQQ) and 1148–1204 (GSGG…QQTS). Low complexity predominate over residues 447-466 (LNSSTSNAANNINLSSSTNS). The segment covering 1148–1172 (GSGGSGGSGGGSSMSSGGGGGGNSN) has biased composition (gly residues). Positions 1185–1199 (SNQSTSSSGNSNNSN) are enriched in low complexity.

This sequence belongs to the protein kinase superfamily. Ser/Thr protein kinase family. GCN2 subfamily.

The catalysed reaction is L-seryl-[protein] + ATP = O-phospho-L-seryl-[protein] + ADP + H(+). The enzyme catalyses L-threonyl-[protein] + ATP = O-phospho-L-threonyl-[protein] + ADP + H(+). The polypeptide is Probable serine/threonine-protein kinase ifkB (ifkB) (Dictyostelium discoideum (Social amoeba)).